A 726-amino-acid polypeptide reads, in one-letter code: MEQQQKQEPGGGGGGVRVVARICPCAPPPPPPDAALNFQVAALNDPALISFIPRRPTASAATAAASGRGDGPKDKQQQQQQKYRVDGCYLRDDPNHRVFHNEVKPLIDGRGGGGGGRGGAKACVVACGDAAAKRHLFMGSPDQPGLFTMAMAQLLDSSKAIGAAVTVSSYQVLQDTHILDLLEPKNHEVLILEDADGQTHLKGLSRVGVNSIEEFSQLCCCATNQQRHHPAKDSTQLQDWGHQGLIIYVSSFDQQGKECALAKINFLNLAGYVDPKQKKNEGLALLTGNKSMHALMNVVQALNSNQRFVPYRQSKVTRILQDSLCKSKTSGSVLIACLAEDCCQDSVSTLALASRSSQVVNEQYYSLSLSAKKSSKSNMNLPTDAKTLSRTFIHKTMSMQEKNARPGFNNSGVKGGQTPTANRRTQPIISSTKKSGSSICTSIKMKENYAKPKISGRKLFCPSNNSLKEENATDVASTVVTETKSATVRIQADEVQPLVGMEIRAALLNEGCSEIGNTGDVKSSEMQEVVHCSTQELLASTIQEEDYALSNMEPENSCTDMGLTCSSITDNLVEKTPASSTLSSPKLSDRLREISNSLKLLSTRPVSVRAEKWDIECARRINTIAPEPKTPEVHLKFEQAEDPKDKLTARSTGIKKSLAQECLTFLNSANKEQLKSLKGIGDKRANYILELREESPELFKEISDLRDIIGMNSKEIKKMMSGIIDP.

Disordered regions lie at residues 1–20 (MEQQ…RVVA), 60–82 (AATA…QQQK), and 402–423 (KNAR…TANR). The 345-residue stretch at 15–359 (GVRVVARICP…LALASRSSQV (345 aa)) folds into the Kinesin motor domain. The span at 408–423 (FNNSGVKGGQTPTANR) shows a compositional bias: polar residues.

Belongs to the TRAFAC class myosin-kinesin ATPase superfamily. Kinesin family. KIN-10 subfamily.

The polypeptide is Kinesin-like protein KIN-10B (Oryza sativa subsp. japonica (Rice)).